A 146-amino-acid chain; its full sequence is Histone H2A.1 (146 aa).

Positions 118-146 (SPAAAEKEAKSPKKKTSTKSPKKKVAAKE) are disordered. 2 short sequence motifs (SPKK motif) span residues 128 to 131 (SPKK) and 137 to 140 (SPKK). Over residues 129–146 (PKKKTSTKSPKKKVAAKE) the composition is skewed to basic residues.

Belongs to the histone H2A family. As to quaternary structure, the nucleosome is a histone octamer containing two molecules each of H2A, H2B, H3 and H4 assembled in one H3-H4 heterotetramer and two H2A-H2B heterodimers. The octamer wraps approximately 147 bp of DNA. Post-translationally, phosphorylated within its C-terminal part, probably at the SPKK motifs. As to expression, expressed preferentially in meristematic tissues of young seedlings, in stigma and ovary but not in pollen.

Its subcellular location is the nucleus. It is found in the chromosome. Its function is as follows. Core component of nucleosome. Nucleosomes wrap and compact DNA into chromatin, limiting DNA accessibility to the cellular machineries which require DNA as a template. Histones thereby play a central role in transcription regulation, DNA repair, DNA replication and chromosomal stability. DNA accessibility is regulated via a complex set of post-translational modifications of histones, also called histone code, and nucleosome remodeling. This Triticum aestivum (Wheat) protein is Histone H2A.1 (H2A-9).